Consider the following 175-residue polypeptide: Protein OPG036 (175 aa).

This sequence belongs to the poxviridae OPG036 family.

It localises to the host nucleus. Functionally, plays a role in the inhibition of host innate immune response. Within the host nucleus, inhibits activation of interferon-beta promoter by inhibiting IRF3 activation. This is Protein OPG036 (OPG036) from Bos taurus (Bovine).